Consider the following 698-residue polypeptide: UvrABC system protein B (698 aa).

One can recognise a Helicase ATP-binding domain in the interval 28-414 (RRILAGERDV…SGGEFVEQVI (387 aa)). 41 to 48 (GATGTGKS) serves as a coordination point for ATP. A Beta-hairpin motif is present at residues 94 to 117 (YYDYYQPEAYIAQTDTYIEKDSSI). The 167-residue stretch at 432 to 598 (QIDDLIGEIR…PLRKKIADIL (167 aa)) folds into the Helicase C-terminal domain. The interval 609–629 (DTVQVGGSGRNVSRGRRAQSE) is disordered. The 36-residue stretch at 653–688 (ADLIKDLTAQMMAAASDLQFELAARFRDEIADLKKE) folds into the UVR domain.

Belongs to the UvrB family. In terms of assembly, forms a heterotetramer with UvrA during the search for lesions. Interacts with UvrC in an incision complex.

Its subcellular location is the cytoplasm. Its function is as follows. The UvrABC repair system catalyzes the recognition and processing of DNA lesions. A damage recognition complex composed of 2 UvrA and 2 UvrB subunits scans DNA for abnormalities. Upon binding of the UvrA(2)B(2) complex to a putative damaged site, the DNA wraps around one UvrB monomer. DNA wrap is dependent on ATP binding by UvrB and probably causes local melting of the DNA helix, facilitating insertion of UvrB beta-hairpin between the DNA strands. Then UvrB probes one DNA strand for the presence of a lesion. If a lesion is found the UvrA subunits dissociate and the UvrB-DNA preincision complex is formed. This complex is subsequently bound by UvrC and the second UvrB is released. If no lesion is found, the DNA wraps around the other UvrB subunit that will check the other stand for damage. The protein is UvrABC system protein B of Mycobacterium leprae (strain TN).